A 432-amino-acid polypeptide reads, in one-letter code: N-acylneuraminate cytidylyltransferase (432 aa).

Residue Met-1 is modified to N-acetylmethionine. Positions 1–38 (MDALEKGAATSGPAPRGRPSRGRPPKLQRSRGAGRGLE) are disordered. Positions 15–31 (PRGRPSRGRPPKLQRSR) match the BC1 motif motif. A compositionally biased stretch (basic residues) spans 18-29 (RPSRGRPPKLQR). 2 positions are modified to omega-N-methylarginine: Arg-35 and Arg-50. Arg-50, Asn-60, Arg-109, Ser-118, Ser-120, and Gln-141 together coordinate substrate. The BC2 motif signature appears at 198-204 (KRPRRQD). Arg-199 is an active-site residue. The BC3 motif signature appears at 267-274 (KEKLKEIK).

Belongs to the CMP-NeuNAc synthase family. As to quaternary structure, homotetramer; the active enzyme is formed by a dimer of dimers. In terms of tissue distribution, liver.

It localises to the nucleus. It catalyses the reaction an N-acylneuraminate + CTP = a CMP-N-acyl-beta-neuraminate + diphosphate. It functions in the pathway amino-sugar metabolism; N-acetylneuraminate metabolism. Catalyzes the activation of N-acetylneuraminic acid (NeuNAc) to cytidine 5'-monophosphate N-acetylneuraminic acid (CMP-NeuNAc), a substrate required for the addition of sialic acid. Has some activity toward NeuNAc, N-glycolylneuraminic acid (Neu5Gc) or 2-keto-3-deoxy-D-glycero-D-galacto-nononic acid (KDN). In Rattus norvegicus (Rat), this protein is N-acylneuraminate cytidylyltransferase (Cmas).